Here is a 574-residue protein sequence, read N- to C-terminus: Interleukin-22 receptor subunit alpha-1 (574 aa).

The signal sequence occupies residues 1–15 (MRTLLTILTVGSLAA). The Extracellular portion of the chain corresponds to 16 to 228 (HAPEDPSDLL…VKTLPDRTWT (213 aa)). Fibronectin type-III domains are found at residues 17–124 (APED…LKPP) and 141–221 (PTPT…RVKT). Cys71 and Cys79 form a disulfide bridge. Asn80 and Asn172 each carry an N-linked (GlcNAc...) asparagine glycan. A disulfide bridge links Cys128 with Cys217. The helical transmembrane segment at 229–249 (YSFSGAFLFSMGFLVAVLCYL) threads the bilayer. The Cytoplasmic portion of the chain corresponds to 250–574 (SYRYVTKPPA…GLALTVQWES (325 aa)). 3 disordered regions span residues 388-440 (SSYA…AGSC), 454-489 (AMEE…EGTP), and 507-560 (HPMS…TELD). Residues Ser410 and Ser414 each carry the phosphoserine modification.

This sequence belongs to the type II cytokine receptor family. In terms of assembly, heterodimer with IL10RB and with IL20RB. IL22 binding to heterodimer is greater than binding to IL22RA1 alone. Interacts with FBXW12; the interaction promotes ubiquitination of IL22RA1. Ubiquitinated. Expressed in colon, liver, lung, pancreas and kidney. No expression in immune cells such as monocytes, T-cells, and NK-cells. Expressed in keratinocytes of normal skin as well as in psoriatic skin lesion. Detected in normal blood brain barrier endothelial cells as well as in multiple sclerosis lesions; Strongly expressed on central nervous system vessels within infiltrated multiple sclerosis lesions. Overexpressed in synovial fluid cells from rheumatoid arthritis and spondyloarthropathy patients.

Its subcellular location is the cell membrane. In terms of biological role, component of the receptor for IL20, IL22 and IL24. Component of IL22 receptor formed by IL22RA1 and IL10RB enabling IL22 signaling via JAK/STAT pathways. IL22 also induces activation of MAPK1/MAPK3 and Akt kinases pathways. Component of one of the receptor for IL20 and IL24 formed by IL22RA1 and IL20RB also signaling through STATs activation. Mediates IL24 antiangiogenic activity as well as IL24 inhibitory effect on endothelial cell tube formation and differentiation. The protein is Interleukin-22 receptor subunit alpha-1 (IL22RA1) of Homo sapiens (Human).